We begin with the raw amino-acid sequence, 582 residues long: DNA repair and recombination protein radC (582 aa).

Residues 146–150 mediate DNA binding; the sequence is KRALR. Residues 194-204 show a composition bias toward basic and acidic residues; sequence KKEPMRVKPSL. Disordered stretches follow at residues 194 to 226, 310 to 400, and 485 to 582; these read KKEP…NSAA, QIPN…INGQ, and APSG…QHQH. Over residues 326 to 335 the composition is skewed to polar residues; that stretch reads QNQYTNQRQS. Residues 516 to 529 show a composition bias toward low complexity; sequence AAAQNNTAAANRMA.

Belongs to the RAD52 family. Part of a complex that includes RAD51, RAD52 and RAD59.

The protein localises to the nucleus. In terms of biological role, involved in DNA double-strand break (DSB) repair and recombination. Promotes the annealing of complementary single-stranded DNA and by stimulation of the RAD51 recombinase. This chain is DNA repair and recombination protein radC (radC), found in Emericella nidulans (strain FGSC A4 / ATCC 38163 / CBS 112.46 / NRRL 194 / M139) (Aspergillus nidulans).